The following is a 312-amino-acid chain: Olfactory receptor 2L5 (312 aa).

At 1 to 24 the chain is on the extracellular side; sequence MENYNQTSTDFILLGLFPPSKIGL. Asn-5 is a glycosylation site (N-linked (GlcNAc...) asparagine). The helical transmembrane segment at 25–48 threads the bilayer; the sequence is FLFILFVLIFLMALIGNLSMILLI. Over 49-56 the chain is Cytoplasmic; sequence FLDTHLHT. A helical membrane pass occupies residues 57-78; it reads PMYFLLSQLSLIDLNYISTIVP. Over 79 to 99 the chain is Extracellular; it reads KMASDFLYGNKSISFIGCGIQ. An intrachain disulfide couples Cys-96 to Cys-188. Residues 100 to 119 traverse the membrane as a helical segment; it reads SFFFMTFAGAEALLLTSMAY. Topologically, residues 120–138 are cytoplasmic; sequence DRYVAICFPLHYPIRMSKR. A helical membrane pass occupies residues 139-157; it reads MYVLMITGSWMIGSINSCA. Residues 158–194 lie on the Extracellular side of the membrane; sequence HTVYAFRIPYCKSRAINHFFCDVPAMLTLACTDTWVY. A helical transmembrane segment spans residues 195–218; the sequence is EYTVFLSSTIFLVFPFTGIACSYG. At 219 to 235 the chain is on the cytoplasmic side; sequence WVLLAVYRMHSAEGRKK. A helical transmembrane segment spans residues 236 to 258; sequence AYSTCSTHLTVVTFYYAPFAYTY. The Extracellular segment spans residues 259-271; the sequence is LCPRSLRSLTEDK. A helical transmembrane segment spans residues 272 to 291; that stretch reads VLAVFYTILTPMLNPIIYSL. The Cytoplasmic segment spans residues 292-312; that stretch reads RNKEVMGALTRVIQNIFSVKM.

It belongs to the G-protein coupled receptor 1 family.

The protein localises to the cell membrane. Its function is as follows. Odorant receptor. The protein is Olfactory receptor 2L5 (OR2L5) of Homo sapiens (Human).